The primary structure comprises 61 residues: Conotoxin LiC32 (61 aa).

Residues 1–22 (MRCVPVFIILLLLSPSAPSVDA) form the signal peptide. Positions 23-44 (HPKTKDDVPLASFHDDAKRTLQ) are excised as a propeptide. At C60 the chain carries Cysteine amide.

It belongs to the conotoxin T superfamily. Contains 2 disulfide bonds that can be either 'C1-C3, C2-C4' or 'C1-C4, C2-C3', since these disulfide connectivities have been observed for conotoxins with cysteine framework V (for examples, see AC P0DQQ7 and AC P81755). As to expression, expressed by the venom duct.

Its subcellular location is the secreted. Has the ability to interact with the G-protein coupled somatostatin type 3 receptor (SSTR3). The ability was measured in competition binding experiments and the constant of inhibition (Ki) has been evaluated to be 3.5 uM. This is Conotoxin LiC32 from Conus lividus (Livid cone).